A 250-amino-acid polypeptide reads, in one-letter code: 5-oxoprolinase subunit A (250 aa).

The protein belongs to the LamB/PxpA family. Forms a complex composed of PxpA, PxpB and PxpC.

The enzyme catalyses 5-oxo-L-proline + ATP + 2 H2O = L-glutamate + ADP + phosphate + H(+). Functionally, catalyzes the cleavage of 5-oxoproline to form L-glutamate coupled to the hydrolysis of ATP to ADP and inorganic phosphate. This chain is 5-oxoprolinase subunit A, found in Paraburkholderia xenovorans (strain LB400).